The sequence spans 107 residues: Ribonuclease P protein component 4 (107 aa).

Cys66, Cys69, Cys92, and Cys95 together coordinate Zn(2+).

This sequence belongs to the eukaryotic/archaeal RNase P protein component 4 family. As to quaternary structure, consists of a catalytic RNA component and at least 4-5 protein subunits. The cofactor is Zn(2+).

It localises to the cytoplasm. It catalyses the reaction Endonucleolytic cleavage of RNA, removing 5'-extranucleotides from tRNA precursor.. In terms of biological role, part of ribonuclease P, a protein complex that generates mature tRNA molecules by cleaving their 5'-ends. In Methanosarcina acetivorans (strain ATCC 35395 / DSM 2834 / JCM 12185 / C2A), this protein is Ribonuclease P protein component 4.